The following is a 335-amino-acid chain: Beta-hexosaminidase (335 aa).

Substrate contacts are provided by residues Asp-60, Arg-68, Arg-133, and 163 to 164 (KH). The active-site Proton donor/acceptor is His-176. Asp-247 acts as the Nucleophile in catalysis.

The protein belongs to the glycosyl hydrolase 3 family. NagZ subfamily.

The protein localises to the cytoplasm. It carries out the reaction Hydrolysis of terminal non-reducing N-acetyl-D-hexosamine residues in N-acetyl-beta-D-hexosaminides.. The protein operates within cell wall biogenesis; peptidoglycan recycling. Functionally, plays a role in peptidoglycan recycling by cleaving the terminal beta-1,4-linked N-acetylglucosamine (GlcNAc) from peptide-linked peptidoglycan fragments, giving rise to free GlcNAc, anhydro-N-acetylmuramic acid and anhydro-N-acetylmuramic acid-linked peptides. The sequence is that of Beta-hexosaminidase from Stenotrophomonas maltophilia (strain K279a).